A 297-amino-acid polypeptide reads, in one-letter code: Craniofacial development protein 1 (297 aa).

Acidic residues-rich tracts occupy residues 1–18 and 25–43; these read MEEF…DEDY and YSED…DGEE. 2 disordered regions span residues 1-154 and 190-221; these read MEEF…ELEK and FFKQ…RSSG. A compositionally biased stretch (basic residues) spans 48–65; that stretch reads TKGKKRKAQSIPARKRKQ. Acidic residues predominate over residues 69 to 78; sequence LEEEEEDANE. Ser-80, Ser-83, and Ser-84 each carry phosphoserine. The span at 93-110 shows a compositional bias: basic and acidic residues; sequence EQEKGIGAEDARKKKEDE. Ser-114 is subject to Phosphoserine. Lys-148 is covalently cross-linked (Glycyl lysine isopeptide (Lys-Gly) (interchain with G-Cter in SUMO2)). The segment at 176–215 is hydrophilic; the sequence is VTKEVDATSKEAKSFFKQNEKEKPQTNVPAALPSLPAGSG. A compositionally biased stretch (basic and acidic residues) spans 190–199; it reads FFKQNEKEKP. The residue at position 214 (Ser-214) is a Phosphoserine. The region spanning 216–297 is the BCNT-C domain; that stretch reads LKRSSGMSNL…RDLRLSKMKP (82 aa). At Lys-217 the chain carries N6-methyllysine. Ser-248 bears the Phosphoserine mark.

Its subcellular location is the chromosome. The protein localises to the centromere. It localises to the kinetochore. In terms of biological role, may play a role during embryogenesis. This Camelus dromedarius (Dromedary) protein is Craniofacial development protein 1 (CFDP1).